Consider the following 475-residue polypeptide: Glycogen synthase (475 aa).

Position 15 (Lys15) interacts with ADP-alpha-D-glucose.

It belongs to the glycosyltransferase 1 family. Bacterial/plant glycogen synthase subfamily.

The catalysed reaction is [(1-&gt;4)-alpha-D-glucosyl](n) + ADP-alpha-D-glucose = [(1-&gt;4)-alpha-D-glucosyl](n+1) + ADP + H(+). Its pathway is glycan biosynthesis; glycogen biosynthesis. Its function is as follows. Synthesizes alpha-1,4-glucan chains using ADP-glucose. The chain is Glycogen synthase from Clostridium kluyveri (strain ATCC 8527 / DSM 555 / NBRC 12016 / NCIMB 10680 / K1).